The sequence spans 845 residues: Protein P (845 aa).

The tract at residues 1-179 (MPLSYQHFRK…FCGSPYSWEQ (179 aa)) is terminal protein domain (TP). Residues 180–348 (ELQHGRLVIK…YCLSHLVNLR (169 aa)) are spacer. The disordered stretch occupies residues 226–246 (GLQPHQGPLASSQPGRSGSIR). The tract at residues 349–692 (EDRGPCDEHG…YMNLYPVARQ (344 aa)) is polymerase/reverse transcriptase domain (RT). One can recognise a Reverse transcriptase domain in the interval 359-602 (EHHIRIPRTP…YSLNFMGYVI (244 aa)). Positions 431, 553, and 554 each coordinate Mg(2+).

The protein belongs to the hepadnaviridae P protein family.

The enzyme catalyses DNA(n) + a 2'-deoxyribonucleoside 5'-triphosphate = DNA(n+1) + diphosphate. The catalysed reaction is Endonucleolytic cleavage to 5'-phosphomonoester.. With respect to regulation, activated by host HSP70 and HSP40 in vitro to be able to bind the epsilon loop of the pgRNA. Because deletion of the RNase H region renders the protein partly chaperone-independent, the chaperones may be needed indirectly to relieve occlusion of the RNA-binding site by this domain. Inhibited by several reverse-transcriptase inhibitors: Lamivudine, Adefovir and Entecavir. Multifunctional enzyme that converts the viral RNA genome into dsDNA in viral cytoplasmic capsids. This enzyme displays a DNA polymerase activity that can copy either DNA or RNA templates, and a ribonuclease H (RNase H) activity that cleaves the RNA strand of RNA-DNA heteroduplexes in a partially processive 3'- to 5'-endonucleasic mode. Neo-synthesized pregenomic RNA (pgRNA) are encapsidated together with the P protein, and reverse-transcribed inside the nucleocapsid. Initiation of reverse-transcription occurs first by binding the epsilon loop on the pgRNA genome, and is initiated by protein priming, thereby the 5'-end of (-)DNA is covalently linked to P protein. Partial (+)DNA is synthesized from the (-)DNA template and generates the relaxed circular DNA (RC-DNA) genome. After budding and infection, the RC-DNA migrates in the nucleus, and is converted into a plasmid-like covalently closed circular DNA (cccDNA). The activity of P protein does not seem to be necessary for cccDNA generation, and is presumably released from (+)DNA by host nuclear DNA repair machinery. This chain is Protein P, found in Hepatitis B virus genotype A2 subtype adw2 (isolate Germany/991/1990) (HBV-A).